We begin with the raw amino-acid sequence, 313 residues long: Olfactory receptor 1D2 (313 aa).

The Extracellular segment spans residues 1 to 25 (MDGGNQSEGSEFLLLGMSESPEQQR). The N-linked (GlcNAc...) asparagine glycan is linked to asparagine 5. The chain crosses the membrane as a helical span at residues 26–49 (ILFWMFLSMYLVTVLGNVLIILAI). Over 50 to 57 (SSDSRLHT) the chain is Cytoplasmic. A helical transmembrane segment spans residues 58-79 (PMYFFLANLSFTDLFFVTNTIP). The Extracellular portion of the chain corresponds to 80–100 (KMLVNLQSQDKAISYAGCLTQ). Cysteine 97 and cysteine 189 are oxidised to a cystine. Residues 101–120 (LYFLLSLVTLDNLILAVMAY) form a helical membrane-spanning segment. Residues 121 to 139 (DRYVAICCPLHYVTAMSPR) lie on the Cytoplasmic side of the membrane. The chain crosses the membrane as a helical span at residues 140-158 (LCILLLSLCWVFSVLYGLI). The Extracellular segment spans residues 159 to 196 (HTLLMTRVTFCGSRKIHYLFCEMYFLLRLACSNIQINH). A glycan (N-linked (GlcNAc...) asparagine) is linked at asparagine 195. The chain crosses the membrane as a helical span at residues 197–219 (TVLXATGCFIFLIPLGFMIXSYA). At 220 to 236 (RIVRAILRIPSATGKYK) the chain is on the cytoplasmic side. A helical membrane pass occupies residues 237-259 (AFSTCASHLAVVSLFYGTLGMVY). The Extracellular portion of the chain corresponds to 260–271 (LQPLQTYSTKDS). The chain crosses the membrane as a helical span at residues 272-291 (VATVMYAVVTPMMNPFIYSL). Topologically, residues 292 to 313 (RNKDIHGALGRLLQGKAFQKLT) are cytoplasmic.

The protein belongs to the G-protein coupled receptor 1 family.

It localises to the cell membrane. In terms of biological role, odorant receptor. This is Olfactory receptor 1D2 (OR1D2) from Pongo pygmaeus (Bornean orangutan).